Reading from the N-terminus, the 875-residue chain is MEKLHQCYWKSGEPQSDDIEASRMKRAAAKHLIERYYHQLTEGCGNEACTNEFCASCPTFLRMDNNAAAIKALELYKINAKLCDPHPSKKGASSAYLENSKGAPNNSCSEIKMNKKGARIDFKDVTYLTEEKVYEILELCREREDYSPLIRVIGRVFSSAEALVQSFRKVKQHTKEELKSLQAKDEDKDEDEKEKAACSAAAMEEDSEASSSRIGDSSQGDNNLQKLGPDDVSVDIDAIRRVYTRLLSNEKIETAFLNALVYLSPNVECDLTYHNVYSRDPNYLNLFIIVMENRNLHSPEYLEMALPLFCKAMSKLPLAAQGKLIRLWSKYNADQIRRMMETFQQLITYKVISNEFNSRNLVNDDDAIVAASKCLKMVYYANVVGGEVDTNHNEEDDEEPIPESSELTLQELLGEERRNKKGPRVDPLETELGVKTLDCRKPLIPFEEFINEPLNEVLEMDKDYTFFKVETENKFSFMTCPFILNAVTKNLGLYYDNRIRMYSERRITVLYSLVQGQQLNPYLRLKVRRDHIIDDALVRLEMIAMENPADLKKQLYVEFEGEQGVDEGGVSKEFFQLVVEEIFNPDIGMFTYDESTKLFWFNPSSFETEGQFTLIGIVLGLAIYNNCILDVHFPMVVYRKLMGKKGTFRDLGDSHPVLYQSLKDLLEYEGNVEDDMMITFQISQTDLFGNPMMYDLKENGDKIPITNENRKEFVNLYSDYILNKSVEKQFKAFRRGFHMVTNESPLKYLFRPEEIELLICGSRNLDFQALEETTEYDGGYTRDSVLIREFWEIVHSFTDEQKRLFLQFTTGTDRAPVGGLGKLKMIIAKNGPDTERLPTSHTCFNVLLLPEYSSKEKLKERLLKAITYAKGFGML.

The C4-type; atypical zinc-finger motif lies at 44–83 (CGNEACTNEFCASCPTFLRMDNNAAAIKALELYKINAKLC). Residues 175-186 (KEELKSLQAKDE) show a composition bias toward basic and acidic residues. The tract at residues 175–226 (KEELKSLQAKDEDKDEDEKEKAACSAAAMEEDSEASSSRIGDSSQGDNNLQK) is disordered. Residues 213-225 (RIGDSSQGDNNLQ) are compositionally biased toward polar residues. Ser218 is modified (phosphoserine). The interval 401–418 (IPESSELTLQELLGEERR) is E6-binding. An interaction with HCV core protein region spans residues 418-517 (RNKKGPRVDP…TVLYSLVQGQ (100 aa)). Tyr659 bears the Phosphotyrosine; by ABL1 mark. The 100-residue stretch at 776 to 875 (YDGGYTRDSV…ITYAKGFGML (100 aa)) folds into the HECT domain. Cys843 acts as the Glycyl thioester intermediate in catalysis.

In terms of assembly, the active form is probably a homotrimer. Binds UBQLN1 and UBQLN2. Interacts with the 26S proteasome. Interacts with BPY2. Interacts with HIF1AN, MAPK6 and NEURL4; interaction with MAPK6 may be mediated by NEURL4. Interacts with the proteasomal subunit PSMD4. Interacts with ESR1 and WBP2. Interacts with BMAL1. Interacts with ARC. As to quaternary structure, (Microbial infection) Interacts with HCV core protein and targets it to degradation. (Microbial infection) Interacts with the E6 protein of the cancer-associated human papillomavirus types 16 and 18. The E6/E6-AP complex binds to and targets the p53/TP53 tumor-suppressor protein for ubiquitin-mediated proteolysis. Post-translationally, phosphorylation at Tyr-659 by ABL1 impairs E3 ligase activity and protects p53/TP53 from degradation in (HPV)-infected cells.

The protein resides in the cytoplasm. It is found in the nucleus. It catalyses the reaction S-ubiquitinyl-[E2 ubiquitin-conjugating enzyme]-L-cysteine + [acceptor protein]-L-lysine = [E2 ubiquitin-conjugating enzyme]-L-cysteine + N(6)-ubiquitinyl-[acceptor protein]-L-lysine.. It functions in the pathway protein modification; protein ubiquitination. Functionally, E3 ubiquitin-protein ligase which accepts ubiquitin from an E2 ubiquitin-conjugating enzyme in the form of a thioester and transfers it to its substrates. Several substrates have been identified including the BMAL1, ARC, LAMTOR1, RAD23A and RAD23B, MCM7 (which is involved in DNA replication), annexin A1, the PML tumor suppressor, and the cell cycle regulator CDKN1B. Additionally, may function as a cellular quality control ubiquitin ligase by helping the degradation of the cytoplasmic misfolded proteins. Finally, UBE3A also promotes its own degradation in vivo. Plays an important role in the regulation of the circadian clock: involved in the ubiquitination of the core clock component BMAL1, leading to its proteasomal degradation. Acts as transcriptional coactivator of progesterone receptor PGR upon progesterone hormone activation. Acts as a regulator of synaptic development by mediating ubiquitination and degradation of ARC. Required for synaptic remodeling in neurons by mediating ubiquitination and degradation of LAMTOR1, thereby limiting mTORC1 signaling and activity-dependent synaptic remodeling. Synergizes with WBP2 in enhancing PGR activity. In terms of biological role, (Microbial infection) Catalyzes the high-risk human papilloma virus E6-mediated ubiquitination of p53/TP53, contributing to the neoplastic progression of cells infected by these viruses. The chain is Ubiquitin-protein ligase E3A from Homo sapiens (Human).